The sequence spans 158 residues: Probable cyclic pyranopterin monophosphate synthase (158 aa).

Residues 78 to 80 (MCH) and 114 to 115 (ME) each bind substrate. Aspartate 129 is a catalytic residue.

Belongs to the MoaC family. As to quaternary structure, homohexamer; trimer of dimers.

The enzyme catalyses (8S)-3',8-cyclo-7,8-dihydroguanosine 5'-triphosphate = cyclic pyranopterin phosphate + diphosphate. It functions in the pathway cofactor biosynthesis; molybdopterin biosynthesis. Catalyzes the conversion of (8S)-3',8-cyclo-7,8-dihydroguanosine 5'-triphosphate to cyclic pyranopterin monophosphate (cPMP). The polypeptide is Probable cyclic pyranopterin monophosphate synthase (Methanosarcina acetivorans (strain ATCC 35395 / DSM 2834 / JCM 12185 / C2A)).